Here is a 146-residue protein sequence, read N- to C-terminus: Small ribosomal subunit protein uS5 (146 aa).

In terms of domain architecture, S5 DRBM spans 8 to 71; that stretch reads FQEAIVKIGR…DDAFKSLVTV (64 aa).

This sequence belongs to the universal ribosomal protein uS5 family. As to quaternary structure, part of the 30S ribosomal subunit. Contacts proteins S4 and S8.

In terms of biological role, with S4 and S12 plays an important role in translational accuracy. Functionally, located at the back of the 30S subunit body where it stabilizes the conformation of the head with respect to the body. In Aliarcobacter butzleri (strain RM4018) (Arcobacter butzleri), this protein is Small ribosomal subunit protein uS5.